Reading from the N-terminus, the 649-residue chain is Alpha-amylase (649 aa).

Glutamate 124 acts as the Nucleophile in catalysis. Catalysis depends on aspartate 215, which acts as the Proton donor.

This sequence belongs to the glycosyl hydrolase 57 family. In terms of assembly, homodimer.

It catalyses the reaction Endohydrolysis of (1-&gt;4)-alpha-D-glucosidic linkages in polysaccharides containing three or more (1-&gt;4)-alpha-linked D-glucose units.. Displays a broad range of substrate specificity, with the capacity to hydrolyze carbohydrates as simple as maltotriose. This is Alpha-amylase (amyA) from Pyrococcus furiosus (strain ATCC 43587 / DSM 3638 / JCM 8422 / Vc1).